Consider the following 1405-residue polypeptide: MKDLLNLFNQQRQTLDFDAIKIALASPDLIRSWSYGEVKKPETINYRTFKPERDGLFCAAIFGPIKDYECLCGKYKRMKHRGVVCEKCGTEVTLAKVRRERMGHIDLASPVAHIWFLKSLPSRIGLMLDMTLRDIERVLYFEAYVVTEPGLTPLERRQLLTEEQYLTARQEYNDDFDAAMGAEAVYELLRTIDLQSEMTRLREEIASTGSETKLKRLTKRIKLIEAFLESGNRPEWMVMTVLPVLPPDLRPLVPLDGGRFATSDLNDLYRRVINRNNRLRRLLELNAPDIIVRNEKRMLQESVDALLDNGRRGRAITGTNKRPLKSLADMIKGKQGRFRQNLLGKRVDYSGRSVITVGPYLKLHQCGLPKKMALELFKPFVFAKLQRRGLATTIKAAKKLVEREEAEVWDILEEVIREHPVLLNRAPTLHRLGIQAFEPVLIEGKAIQLHPLVCTAFNADFDGDQMAVHVPLSLEAQLEARALMMSTNNILSPANGEPIIVPSQDVVLGLYYMSRALENKKGEGMVFANTSEVKRAYDNRVVELHAKVKVRITQVDVDTVDGKRTSGTSIVDTTVGRALLSEILPEGLPFQLANTEMTKKNISRLINSSYRLLGLKDTVVFADKLMYTGYAYATRAGVSIGIDDMLIPDEKKGILTEAEAEVLEIQEQYQSGLVTAGERYNKVVDIWSRTSERIAKAMMDTIGTEKVENAKGETIDQKSMNSLYIMADSGARGSQAQIRQLAGMRGLMARPDGSIIETPIKANFREGLNVQEYFNSTHGARKGLADTALKTANSGYLTRRLVDVAQDVVITEVDCGTTEGLIMTPIVEGGDVVEPLKERVLGRVVAEDVYLPGNDEEPIVTRNTLLDEAWVAKLEDASVQSVKVRSTISCESSFGVCARCYGRDLARGHQVNIGEAVGVIAAQSIGEPGTQLTMRTFHIGGAASRAAAVDNITVKTTGSVKFNNLKSVAHASGALVAVSRSGELSVLDGHGRERERYKLPYGATITAKDGDAVKAGQAVANWDPHNHPIVSEVAGFIRFIDFVDGVTVIEKTDELTGLASREITDPKRRGAQAKELRPIVRIVDAKGNDLTIPNTDLPAQYLLPPRSIVNLQDGAAVGVGDVVAKIPQEASKTRDITGGLPRVADLFEARKPKDPAILAERSGIISFGKDTKGKQRLIIKDTDGSEHEELIPKYRQIIVFEGEHVTKGETVVDGEPSPQDILRLLGVEPLAAYLVKEIQDVYRLQGVKINDKHIEVITRQMLRKVEITDQGNSKFLNGEQVERQRVIEENARLVTRNELPAKYDPVLLGITKASLATESFISAASFQETTRVLTEAAVRGTRDNLRGLKENVIVGRLIPAGTGLAYHAGRRKASGLTDSEMETLSGKPAVVEPVATVADAGADEE.

Zn(2+) contacts are provided by Cys70, Cys72, Cys85, and Cys88. 3 residues coordinate Mg(2+): Asp460, Asp462, and Asp464. Positions 815, 890, 897, and 900 each coordinate Zn(2+).

This sequence belongs to the RNA polymerase beta' chain family. In terms of assembly, the RNAP catalytic core consists of 2 alpha, 1 beta, 1 beta' and 1 omega subunit. When a sigma factor is associated with the core the holoenzyme is formed, which can initiate transcription. Requires Mg(2+) as cofactor. It depends on Zn(2+) as a cofactor.

The catalysed reaction is RNA(n) + a ribonucleoside 5'-triphosphate = RNA(n+1) + diphosphate. In terms of biological role, DNA-dependent RNA polymerase catalyzes the transcription of DNA into RNA using the four ribonucleoside triphosphates as substrates. The chain is DNA-directed RNA polymerase subunit beta' from Xanthomonas campestris pv. campestris (strain 8004).